The following is a 192-amino-acid chain: dTTP/UTP pyrophosphatase (192 aa).

Asp68 acts as the Proton acceptor in catalysis.

This sequence belongs to the Maf family. YhdE subfamily. Requires a divalent metal cation as cofactor.

Its subcellular location is the cytoplasm. The enzyme catalyses dTTP + H2O = dTMP + diphosphate + H(+). It carries out the reaction UTP + H2O = UMP + diphosphate + H(+). Functionally, nucleoside triphosphate pyrophosphatase that hydrolyzes dTTP and UTP. May have a dual role in cell division arrest and in preventing the incorporation of modified nucleotides into cellular nucleic acids. The sequence is that of dTTP/UTP pyrophosphatase from Cereibacter sphaeroides (strain ATCC 17023 / DSM 158 / JCM 6121 / CCUG 31486 / LMG 2827 / NBRC 12203 / NCIMB 8253 / ATH 2.4.1.) (Rhodobacter sphaeroides).